A 609-amino-acid chain; its full sequence is DNA-directed RNA polymerase subunit beta' (609 aa).

Cysteine 67, cysteine 69, cysteine 82, and cysteine 85 together coordinate Zn(2+). 3 residues coordinate Mg(2+): aspartate 460, aspartate 462, and aspartate 464.

Belongs to the RNA polymerase beta' chain family. RpoC1 subfamily. In plastids the minimal PEP RNA polymerase catalytic core is composed of four subunits: alpha, beta, beta', and beta''. When a (nuclear-encoded) sigma factor is associated with the core the holoenzyme is formed, which can initiate transcription. It depends on Mg(2+) as a cofactor. Zn(2+) serves as cofactor.

Its subcellular location is the plastid. The protein resides in the chloroplast. It carries out the reaction RNA(n) + a ribonucleoside 5'-triphosphate = RNA(n+1) + diphosphate. Its function is as follows. DNA-dependent RNA polymerase catalyzes the transcription of DNA into RNA using the four ribonucleoside triphosphates as substrates. This chain is DNA-directed RNA polymerase subunit beta', found in Emiliania huxleyi (Coccolithophore).